A 182-amino-acid chain; its full sequence is Adenine phosphoribosyltransferase (182 aa).

It belongs to the purine/pyrimidine phosphoribosyltransferase family. Homodimer.

It is found in the cytoplasm. The enzyme catalyses AMP + diphosphate = 5-phospho-alpha-D-ribose 1-diphosphate + adenine. The protein operates within purine metabolism; AMP biosynthesis via salvage pathway; AMP from adenine: step 1/1. In terms of biological role, catalyzes a salvage reaction resulting in the formation of AMP, that is energically less costly than de novo synthesis. The polypeptide is Adenine phosphoribosyltransferase (Bordetella pertussis (strain Tohama I / ATCC BAA-589 / NCTC 13251)).